An 805-amino-acid chain; its full sequence is Na(+)/H(+) antiporter subunit A (805 aa).

21 helical membrane passes run 4 to 22, 29 to 51, 80 to 102, 109 to 128, 132 to 154, 167 to 189, 209 to 231, 244 to 266, 271 to 293, 300 to 322, 332 to 354, 375 to 397, 431 to 453, 474 to 496, 529 to 551, 597 to 614, 629 to 651, 656 to 674, 679 to 701, 714 to 736, and 778 to 795; these read LHWATISPFLLAILIPFLY, HTGWFVLVLPLVLFIYFIQYLSI, SLLFALLITGIGTLVILYSIFYL, LNNFYVYLLMFMGAMLGVVL, LIVLYVFWELTSLASSLLISYWF, MLITVFGGFAMLGGFSLLYVMTG, FLPAMILVLLGAFTKSAQFPFHI, SAYLHSATMVKAGIYLVARLTPV, AEWFWLLTGFGVVTLLWGSTSAV, GILAFSTVSQLGLIMTLLGLGSA, PAFYSFAIMAAIFHLINHATFKG, LGGLMAIMPVTFTVSLIGLASMA, IIIVVLAWIASVFTFLYCLIMFF, IGMLISPVILGSLVIVFGFFPNI, GFNAELFMTMGVVAAGIILFLMM, YFAYMIVFMILLLGYTMF, IAPYIWVITIVFIVATLSIPFIN, AVVVVGVIGFLLALLFVVF, LALTQLLIETVTVLLLMLAFYHL, NVLNLIISIGVGFFITAIALSSL, and MLEVLVLGIAALGVIALI.

Belongs to the CPA3 antiporters (TC 2.A.63) subunit A family. As to quaternary structure, forms a heterooligomeric complex that consists of seven subunits: MrpA, MrpB, MrpC, MrpD, MrpE, MrpF and MrpG.

Its subcellular location is the cell membrane. In terms of biological role, mnh complex is a Na(+)Li(+)/H(+) antiporter involved in Na(+) and/or Li(+) excretion and Na(+) resistance. Na(+)/H(+) antiport consumes a transmembrane electrical potential, and is thus inferred to be electrogenic. Does not transport K(+), Ca(2+) or Mg(2+). In Alkalihalophilus pseudofirmus (strain ATCC BAA-2126 / JCM 17055 / OF4) (Bacillus pseudofirmus), this protein is Na(+)/H(+) antiporter subunit A (mrpA).